The primary structure comprises 210 residues: Imidazoleglycerol-phosphate dehydratase (210 aa).

This sequence belongs to the imidazoleglycerol-phosphate dehydratase family.

The protein resides in the cytoplasm. The catalysed reaction is D-erythro-1-(imidazol-4-yl)glycerol 3-phosphate = 3-(imidazol-4-yl)-2-oxopropyl phosphate + H2O. It functions in the pathway amino-acid biosynthesis; L-histidine biosynthesis; L-histidine from 5-phospho-alpha-D-ribose 1-diphosphate: step 6/9. This chain is Imidazoleglycerol-phosphate dehydratase, found in Mycobacterium leprae (strain Br4923).